The chain runs to 736 residues: Subtilisin-like protease SBT4.11 (736 aa).

The N-terminal stretch at 1–25 (MAKRGAFSSFHSFLIVLLFLNSVLA) is a signal peptide. The propeptide at 26-113 (VTHGHQDKQV…VFPNKKLKLQ (88 aa)) is activation peptide. Residues 35–112 (VYIVYMGSLP…SVFPNKKLKL (78 aa)) form the Inhibitor I9 domain. A Peptidase S8 domain is found at 117 to 579 (SWDFMGLKEG…AGHVDPIAAT (463 aa)). Asp-145 (charge relay system) is an active-site residue. Asn-176 carries N-linked (GlcNAc...) asparagine glycosylation. His-200 acts as the Charge relay system in catalysis. N-linked (GlcNAc...) asparagine glycosylation is found at Asn-215 and Asn-223. Positions 355 to 437 (KFPLVYGKSA…GLQKDDFESV (83 aa)) constitute a PA domain. The active-site Charge relay system is Ser-518. Asn-555, Asn-602, Asn-638, Asn-646, and Asn-656 each carry an N-linked (GlcNAc...) asparagine glycan.

Belongs to the peptidase S8 family. In terms of processing, the C-terminal propeptide is autocleaved.

Its subcellular location is the secreted. This chain is Subtilisin-like protease SBT4.11, found in Arabidopsis thaliana (Mouse-ear cress).